Reading from the N-terminus, the 1040-residue chain is Nucleotide-binding oligomerization domain-containing protein 2 (1040 aa).

CARD domains follow at residues Cys-26–Cys-122 and His-126–Thr-218. The ATG16L1-binding motif signature appears at Trp-63–Leu-77. Positions 239, 252, 253, 302, 303, 304, 305, 306, and 307 each coordinate ADP. The tract at residues Asp-241 to Ala-274 is required for CARD9 binding. The 326-residue stretch at Asp-293 to Ser-618 folds into the NACHT domain. Residue Gly-299–Ser-306 participates in ATP binding. Cys-395 carries the S-palmitoyl cysteine lipid modification. His-603 lines the ADP pocket. 9 LRR repeats span residues Arg-791 to Pro-812, Val-816 to Ala-839, Gln-844 to Lys-865, Asn-872 to Thr-884, Ser-900 to Ala-920, Ser-928 to Leu-949, Met-956 to Ala-976, Ser-984 to Gln-1005, and Thr-1012 to Gly-1032. Cys-1033 carries the S-palmitoyl cysteine lipid modification.

Belongs to the NOD1-NOD2 family. Homooligomer: homooligomerizes following muramyl dipeptide (MDP)-binding, promoting RIPK2 recruitment. Interacts (via CARD domain) with RIPK2 (via CARD domain). Following RIPK2 recruitment, RIPK2 homooligomerizes via its CARD domain and forms long filaments named RIPosomes. Interacts (via CARD domain) with ubiquitin; inhibiting interaction with RIPK2. Component of a signaling complex consisting of ARHGEF2, NOD2 and RIPK2. Interacts with ANKRD17 (via N-terminus). Interacts with HSPA1A; the interaction enhances NOD2 stability. Interacts (via both CARD domains) with HSP90; the interaction enhances NOD2 stability. Interacts (via CARD domain) with SOCS3; the interaction promotes NOD2 degradation. Interacts (via CARD domain) with ERBIN; the interaction inhibits activation of NOD2. Interacts with MAPKBP1; the interaction is enhanced in the presence of muramyl dipeptide (MDP) and inhibits NOD2 homooligomerization and activation. Interacts with INAVA; the interaction takes place upon Pattern recognition receptor (PRR) stimulation. Interacts (via NACHT domain) with CARD9. Interacts (via CARD domain) with CASP1; this interaction leads to IL1B processing. Also interacts with CASP4. Interacts with NLRP1; this interaction is enhanced in the presence of muramyl dipeptide (MDP) and leads to increased IL1B release. Interacts with NLRP12; this interaction promotes degradation of NOD2 through the ubiquitin-proteasome pathway. Interacts with ANKHD1, C10orf67, CHMP5, DOCK7, ENTR1, KRT15, LDOC1, PPP1R12C, PPP2R3B, TRIM41 and VIM. Interacts with MAVS; interaction takes place following single-stranded RNA (ssRNA)-binding. Interacts with ATG16L1. Interacts with IRGM; promoting IRGM 'Lys-63'-linked polyubiquitination, which is required for interactions with the core autophagy factors. In terms of processing, palmitoylated by ZDHHC5; palmitoylation is required for proper recruitment to the bacterial entry site and hence for proper signaling upon cognate peptidoglycan detection. Palmitoylation promotes localization to the cell membrane. Palmitoylation protects from SQSTM1/p62-dependent autophagic degradation. Polyubiquitinated by TRIM27, leading to proteasome-mediated degradation. Polyubiquitinated and degraded following muramyl dipeptide (MDP) stimulation, conferring MDP tolerance and preventing septic shock. Post-translationally, degraded via selective autophagy following interaction with IRGM. IRGM promotes NOD2-RIPK2 RIPosome recruitment to autophagosome membranes, promoting their SQSTM1/p62-dependent autophagic degradation. In terms of processing, O-glycosylated by OGT, O-GlcNAcylation increases protein stability. In terms of tissue distribution, expressed in monocytes, macrophages, dendritic cells, hepatocytes, preadipocytes, epithelial cells of oral cavity, lung and intestine, with higher expression in ileal Paneth cells and in intestinal stem cells. Expressed at higher level in leukocytes.

Its subcellular location is the cell membrane. It is found in the basolateral cell membrane. It localises to the cytoplasm. The protein localises to the mitochondrion. With respect to regulation, ADP-binding promotes an inactive closed conformation. In terms of biological role, pattern recognition receptor (PRR) that detects bacterial peptidoglycan fragments and other danger signals and plays an important role in gastrointestinal immunity. Specifically activated by muramyl dipeptide (MDP), a fragment of bacterial peptidoglycan found in every bacterial peptidoglycan type. NOD2 specifically recognizes and binds 6-O-phospho-MDP, the phosphorylated form of MDP, which is generated by NAGK. 6-O-phospho-MDP-binding triggers oligomerization that facilitates the binding and subsequent activation of the proximal adapter receptor-interacting RIPK2. Following recruitment, RIPK2 undergoes 'Met-1'- (linear) and 'Lys-63'-linked polyubiquitination by E3 ubiquitin-protein ligases XIAP, BIRC2, BIRC3 and the LUBAC complex, becoming a scaffolding protein for downstream effectors, triggering activation of the NF-kappa-B and MAP kinases signaling. This in turn leads to the transcriptional activation of hundreds of genes involved in immune response. Its ability to detect bacterial MDP plays a central role in maintaining the equilibrium between intestinal microbiota and host immune responses to control inflammation. An imbalance in this relationship results in dysbiosis, whereby pathogenic bacteria prevail on commensals, causing damage in the intestinal epithelial barrier as well as allowing bacterial invasion and inflammation. Acts as a regulator of appetite by sensing MDP in a subset of brain neurons: microbiota-derived MDP reach the brain, where they bind and activate NOD2 in inhibitory hypothalamic neurons, decreasing neuronal activity, thereby regulating satiety and body temperature. NOD2-dependent MDP-sensing of bacterial cell walls in the intestinal epithelial compartment contributes to sustained postnatal growth upon undernutrition. Also plays a role in antiviral response by acting as a sensor of single-stranded RNA (ssRNA) from viruses: upon ssRNA-binding, interacts with MAVS, leading to activation of interferon regulatory factor-3/IRF3 and expression of type I interferon. Also acts as a regulator of autophagy in dendritic cells via its interaction with ATG16L1, possibly by recruiting ATG16L1 at the site of bacterial entry. NOD2 activation in the small intestine crypt also contributes to intestinal stem cells survival and function: acts by promoting mitophagy via its association with ATG16L1. In addition to its main role in innate immunity, also regulates the adaptive immune system by acting as regulator of helper T-cell and regulatory T-cells (Tregs). Besides recognizing pathogens, also involved in the endoplasmic reticulum stress response: acts by sensing and binding to the cytosolic metabolite sphingosine-1-phosphate generated in response to endoplasmic reticulum stress, initiating an inflammation process that leads to activation of the NF-kappa-B and MAP kinases signaling. May also be involved in NLRP1 activation following activation by MDP, leading to CASP1 activation and IL1B release in macrophages. Functionally, acts as a pattern recognition receptor (PRR); able to activate NF-kappa-B. Can activate NF-kappa-B in a muramyl dipeptide (MDP)-independent manner. The chain is Nucleotide-binding oligomerization domain-containing protein 2 from Homo sapiens (Human).